The chain runs to 115 residues: U31-theraphotoxin-Cg1a (115 aa).

Residues 1–18 (MKLCVIIIASLMVASVSG) form the signal peptide. Positions 19–51 (RLRKIKGTELDKKMLLEKLGHGMDIRFEETPRA) are excised as a propeptide. 4 disulfide bridges follow: cysteine 52/cysteine 67, cysteine 60/cysteine 73, cysteine 64/cysteine 113, and cysteine 66/cysteine 86.

Belongs to the neurotoxin 03 (Tx2) family. 02 subfamily. In terms of tissue distribution, expressed by the venom gland.

It is found in the secreted. In terms of biological role, probable ion channel inhibitor. This is U31-theraphotoxin-Cg1a from Chilobrachys guangxiensis (Chinese earth tiger tarantula).